Consider the following 78-residue polypeptide: NAD(P)H-quinone oxidoreductase subunit O (78 aa).

The protein belongs to the complex I NdhO subunit family. In terms of assembly, NDH-1 can be composed of about 15 different subunits; different subcomplexes with different compositions have been identified which probably have different functions.

It localises to the cellular thylakoid membrane. The enzyme catalyses a plastoquinone + NADH + (n+1) H(+)(in) = a plastoquinol + NAD(+) + n H(+)(out). It carries out the reaction a plastoquinone + NADPH + (n+1) H(+)(in) = a plastoquinol + NADP(+) + n H(+)(out). NDH-1 shuttles electrons from an unknown electron donor, via FMN and iron-sulfur (Fe-S) centers, to quinones in the respiratory and/or the photosynthetic chain. The immediate electron acceptor for the enzyme in this species is believed to be plastoquinone. Couples the redox reaction to proton translocation, and thus conserves the redox energy in a proton gradient. Cyanobacterial NDH-1 also plays a role in inorganic carbon-concentration. The chain is NAD(P)H-quinone oxidoreductase subunit O from Prochlorococcus marinus (strain MIT 9312).